Consider the following 210-residue polypeptide: Large ribosomal subunit protein uL3 (210 aa).

The segment at 134–153 (THGNSLSHRAPGSIGQNQTP) is disordered. The residue at position 151 (glutamine 151) is an N5-methylglutamine.

The protein belongs to the universal ribosomal protein uL3 family. Part of the 50S ribosomal subunit. Forms a cluster with proteins L14 and L19. In terms of processing, methylated by PrmB.

One of the primary rRNA binding proteins, it binds directly near the 3'-end of the 23S rRNA, where it nucleates assembly of the 50S subunit. The chain is Large ribosomal subunit protein uL3 from Aeromonas salmonicida (strain A449).